The sequence spans 935 residues: Epstein-Barr nuclear antigen 3 (935 aa).

Disordered regions lie at residues 1-89 (MDKD…DLPG), 342-373 (HVEGATGETREESEDTESDGDDEDLPCIVSRG), 399-446 (TEQG…VPEP), 611-634 (KQASVEVQPPQVTQVSPQQPMEGP), and 883-908 (HGRPRPRTPEWPVQGESGQNVTDHEP). A compositionally biased stretch (acidic residues) spans 10 to 19 (ALDDNMEEEV). Residues 20-29 (PSTSVVQEQV) are compositionally biased toward polar residues. Acidic residues predominate over residues 352–366 (EESEDTESDGDDEDL). Over residues 399–410 (TEQGKEVLEKAR) the composition is skewed to basic and acidic residues. Residues 431 to 440 (SDETATSHGS) are compositionally biased toward polar residues. A compositionally biased stretch (low complexity) spans 615–630 (VEVQPPQVTQVSPQQP).

The protein belongs to the herpesviridae EBNA-3 family. Interacts with human UCKL1. Interacts with host CTPB1; this interaction seems important for EBNA3-mediated transcriptional repression. Interacts with host RBPJ. Interacts with host USP12 and WDR48; these interactions form a deubiquitination-competent complex.

The protein resides in the host nucleus matrix. Its function is as follows. Plays an essential role for activation and immortalization of human B-cells. Represses transcription of viral promoters TP1 and Cp through interaction with host RBPJ, and inhibits EBNA2-mediated activation of these promoters. Since Cp is the promoter for all EBNA mRNAs, EBNA3A probably contributes to a negative autoregulatory control loop. The polypeptide is Epstein-Barr nuclear antigen 3 (EBNA3) (Homo sapiens (Human)).